The following is a 301-amino-acid chain: Nitric oxide synthase-interacting protein (301 aa).

A Phosphoserine modification is found at serine 36. The U-box-like stretch occupies residues 55-75 (DPVVTPDGYLYEREAILEYIL). Residues 78–101 (KREIARQVKAYEKQRGARREEQKE) carry the Nuclear localization signal motif. The tract at residues 131 to 154 (PKAATLPNTEGEQPGPSVGPVGKD) is disordered.

The protein belongs to the NOSIP family. Interacts with NOS1 and NOS3. Interacts with PP2A holoenzyme, containing PPP2CA, PPP2CB, PPP2R1A and PPP2R2A subunits.

The protein localises to the cytoplasm. It is found in the nucleus. It catalyses the reaction S-ubiquitinyl-[E2 ubiquitin-conjugating enzyme]-L-cysteine + [acceptor protein]-L-lysine = [E2 ubiquitin-conjugating enzyme]-L-cysteine + N(6)-ubiquitinyl-[acceptor protein]-L-lysine.. It participates in protein modification; protein ubiquitination. Functionally, E3 ubiquitin-protein ligase that is essential for proper development of the forebrain, the eye and the face. Catalyzes monoubiquitination of serine/threonine-protein phosphatase 2A (PP2A) catalytic subunit PPP2CA/PPP2CB. Negatively regulates nitric oxide production by inducing NOS1 and NOS3 translocation to actin cytoskeleton and inhibiting their enzymatic activity. The protein is Nitric oxide synthase-interacting protein (Nosip) of Mus musculus (Mouse).